The chain runs to 221 residues: Deoxyribose-phosphate aldolase (221 aa).

The Proton donor/acceptor role is filled by Asp91. The active-site Schiff-base intermediate with acetaldehyde is Lys153. Catalysis depends on Lys182, which acts as the Proton donor/acceptor.

It belongs to the DeoC/FbaB aldolase family. DeoC type 1 subfamily.

The protein resides in the cytoplasm. It carries out the reaction 2-deoxy-D-ribose 5-phosphate = D-glyceraldehyde 3-phosphate + acetaldehyde. The protein operates within carbohydrate degradation; 2-deoxy-D-ribose 1-phosphate degradation; D-glyceraldehyde 3-phosphate and acetaldehyde from 2-deoxy-alpha-D-ribose 1-phosphate: step 2/2. Functionally, catalyzes a reversible aldol reaction between acetaldehyde and D-glyceraldehyde 3-phosphate to generate 2-deoxy-D-ribose 5-phosphate. The protein is Deoxyribose-phosphate aldolase of Clostridium botulinum (strain Alaska E43 / Type E3).